The following is a 272-amino-acid chain: Putative phosphoenolpyruvate synthase regulatory protein (272 aa).

Residue 152–159 (GVSRCGKT) coordinates ADP.

This sequence belongs to the pyruvate, phosphate/water dikinase regulatory protein family. PSRP subfamily.

The catalysed reaction is [pyruvate, water dikinase] + ADP = [pyruvate, water dikinase]-phosphate + AMP + H(+). It catalyses the reaction [pyruvate, water dikinase]-phosphate + phosphate + H(+) = [pyruvate, water dikinase] + diphosphate. Bifunctional serine/threonine kinase and phosphorylase involved in the regulation of the phosphoenolpyruvate synthase (PEPS) by catalyzing its phosphorylation/dephosphorylation. This Pseudomonas putida (strain GB-1) protein is Putative phosphoenolpyruvate synthase regulatory protein.